We begin with the raw amino-acid sequence, 329 residues long: 36 kDa antigen (329 aa).

The helical transmembrane segment at 11-31 threads the bilayer; that stretch reads AILTGGGALLLGLIVLFYLAY.

Belongs to the membrane fusion protein (MFP) (TC 8.A.1) family.

It localises to the membrane. The polypeptide is 36 kDa antigen (Helicobacter pylori (strain J99 / ATCC 700824) (Campylobacter pylori J99)).